The following is a 141-amino-acid chain: MLMPKRTKFRKQMKGRNRGKSFRGNSLAFGDIGIKATEHGRIDSRQIEAARIAMTRHIKRAGKIWIRVFPDKPLTAKPLETRMGKGKGSVDKWVMNIQPGRIVYEMAGIEEELAREALALAQSKLPFKTKIVTSESENEIY.

Residues 1-21 show a composition bias toward basic residues; sequence MLMPKRTKFRKQMKGRNRGKS. Residues 1 to 22 are disordered; it reads MLMPKRTKFRKQMKGRNRGKSF.

This sequence belongs to the universal ribosomal protein uL16 family. As to quaternary structure, part of the 50S ribosomal subunit.

In terms of biological role, binds 23S rRNA and is also seen to make contacts with the A and possibly P site tRNAs. This chain is Large ribosomal subunit protein uL16, found in Wolinella succinogenes (strain ATCC 29543 / DSM 1740 / CCUG 13145 / JCM 31913 / LMG 7466 / NCTC 11488 / FDC 602W) (Vibrio succinogenes).